Reading from the N-terminus, the 235-residue chain is tRNA (guanine-N(1)-)-methyltransferase (235 aa).

S-adenosyl-L-methionine is bound by residues G113 and 133–138 (IGDYIL).

It belongs to the RNA methyltransferase TrmD family. Homodimer.

The protein localises to the cytoplasm. The enzyme catalyses guanosine(37) in tRNA + S-adenosyl-L-methionine = N(1)-methylguanosine(37) in tRNA + S-adenosyl-L-homocysteine + H(+). In terms of biological role, specifically methylates guanosine-37 in various tRNAs. This Wolbachia sp. subsp. Brugia malayi (strain TRS) protein is tRNA (guanine-N(1)-)-methyltransferase.